Reading from the N-terminus, the 179-residue chain is Large ribosomal subunit protein uL6 (179 aa).

The protein belongs to the universal ribosomal protein uL6 family. In terms of assembly, part of the 50S ribosomal subunit.

In terms of biological role, this protein binds to the 23S rRNA, and is important in its secondary structure. It is located near the subunit interface in the base of the L7/L12 stalk, and near the tRNA binding site of the peptidyltransferase center. The protein is Large ribosomal subunit protein uL6 of Syntrophomonas wolfei subsp. wolfei (strain DSM 2245B / Goettingen).